The primary structure comprises 74 residues: Dermaseptin-B3 (74 aa).

The signal sequence occupies residues 1–22 (MAFLKKSVFLVLFLGLVSLSIC). Residues 23–43 (EEEKREEENEEKQEDDEQSEE) constitute a propeptide that is removed on maturation.

As to expression, expressed by the skin glands.

The protein resides in the secreted. Its function is as follows. Possesses a potent antimicrobial activity against Gram-positive and Gram-negative bacteria. Probably acts by disturbing membrane functions with its amphipathic structure. The sequence is that of Dermaseptin-B3 from Phyllomedusa bicolor (Two-colored leaf frog).